Here is a 324-residue protein sequence, read N- to C-terminus: Phospho-N-acetylmuramoyl-pentapeptide-transferase (324 aa).

10 helical membrane passes run 5–25 (GLLV…PLFI), 52–72 (PTMG…IMAI), 77–97 (LGAE…IGFL), 122–142 (VIAI…YIMI), 149–169 (FELG…GSNA), 176–196 (LDGL…IIAV), 201–221 (FGVA…LVFN), 227–247 (VFMG…VAIL), 253–273 (LLVI…IQVI), and 302–322 (VVVT…YIGV).

This sequence belongs to the glycosyltransferase 4 family. MraY subfamily. Mg(2+) serves as cofactor.

The protein localises to the cell membrane. It carries out the reaction UDP-N-acetyl-alpha-D-muramoyl-L-alanyl-gamma-D-glutamyl-meso-2,6-diaminopimeloyl-D-alanyl-D-alanine + di-trans,octa-cis-undecaprenyl phosphate = di-trans,octa-cis-undecaprenyl diphospho-N-acetyl-alpha-D-muramoyl-L-alanyl-D-glutamyl-meso-2,6-diaminopimeloyl-D-alanyl-D-alanine + UMP. It functions in the pathway cell wall biogenesis; peptidoglycan biosynthesis. Catalyzes the initial step of the lipid cycle reactions in the biosynthesis of the cell wall peptidoglycan: transfers peptidoglycan precursor phospho-MurNAc-pentapeptide from UDP-MurNAc-pentapeptide onto the lipid carrier undecaprenyl phosphate, yielding undecaprenyl-pyrophosphoryl-MurNAc-pentapeptide, known as lipid I. In Bacillus anthracis, this protein is Phospho-N-acetylmuramoyl-pentapeptide-transferase.